A 367-amino-acid chain; its full sequence is Holliday junction branch migration complex subunit RuvB (367 aa).

The interval 2–196 is large ATPase domain (RuvB-L); it reads TDEPLTDRPP…FGFTARLDFY (195 aa). ATP-binding positions include Leu-35, Arg-36, Gly-77, Lys-80, Thr-81, Thr-82, 143–145, Arg-186, Tyr-196, and Arg-233; that span reads EDF. Thr-81 is a binding site for Mg(2+). Positions 197-267 are small ATPAse domain (RuvB-S); that stretch reads EPADLERIVH…VAQAALAVYE (71 aa). Residues 270-367 form a head domain (RuvB-H) region; that stretch reads EHGLDRLDRA…IDRDAGEPTA (98 aa). DNA-binding residues include Arg-325 and Arg-330.

This sequence belongs to the RuvB family. As to quaternary structure, homohexamer. Forms an RuvA(8)-RuvB(12)-Holliday junction (HJ) complex. HJ DNA is sandwiched between 2 RuvA tetramers; dsDNA enters through RuvA and exits via RuvB. An RuvB hexamer assembles on each DNA strand where it exits the tetramer. Each RuvB hexamer is contacted by two RuvA subunits (via domain III) on 2 adjacent RuvB subunits; this complex drives branch migration. In the full resolvosome a probable DNA-RuvA(4)-RuvB(12)-RuvC(2) complex forms which resolves the HJ.

The protein localises to the cytoplasm. It catalyses the reaction ATP + H2O = ADP + phosphate + H(+). Its function is as follows. The RuvA-RuvB-RuvC complex processes Holliday junction (HJ) DNA during genetic recombination and DNA repair, while the RuvA-RuvB complex plays an important role in the rescue of blocked DNA replication forks via replication fork reversal (RFR). RuvA specifically binds to HJ cruciform DNA, conferring on it an open structure. The RuvB hexamer acts as an ATP-dependent pump, pulling dsDNA into and through the RuvAB complex. RuvB forms 2 homohexamers on either side of HJ DNA bound by 1 or 2 RuvA tetramers; 4 subunits per hexamer contact DNA at a time. Coordinated motions by a converter formed by DNA-disengaged RuvB subunits stimulates ATP hydrolysis and nucleotide exchange. Immobilization of the converter enables RuvB to convert the ATP-contained energy into a lever motion, pulling 2 nucleotides of DNA out of the RuvA tetramer per ATP hydrolyzed, thus driving DNA branch migration. The RuvB motors rotate together with the DNA substrate, which together with the progressing nucleotide cycle form the mechanistic basis for DNA recombination by continuous HJ branch migration. Branch migration allows RuvC to scan DNA until it finds its consensus sequence, where it cleaves and resolves cruciform DNA. This is Holliday junction branch migration complex subunit RuvB from Acidothermus cellulolyticus (strain ATCC 43068 / DSM 8971 / 11B).